The chain runs to 430 residues: tRNA(Ile)-lysidine synthase (430 aa).

ATP is bound at residue 21-26 (SGGLDS).

The protein belongs to the tRNA(Ile)-lysidine synthase family.

The protein localises to the cytoplasm. It carries out the reaction cytidine(34) in tRNA(Ile2) + L-lysine + ATP = lysidine(34) in tRNA(Ile2) + AMP + diphosphate + H(+). Functionally, ligates lysine onto the cytidine present at position 34 of the AUA codon-specific tRNA(Ile) that contains the anticodon CAU, in an ATP-dependent manner. Cytidine is converted to lysidine, thus changing the amino acid specificity of the tRNA from methionine to isoleucine. In Salmonella choleraesuis (strain SC-B67), this protein is tRNA(Ile)-lysidine synthase.